The following is a 96-amino-acid chain: Antitoxin ParD4 (96 aa).

The protein belongs to the ParD antitoxin family.

Antitoxin component of a type II toxin-antitoxin (TA) system. Neutralizes the effect of cognate toxin ParE4, but no other RelE or ParE toxin. This is Antitoxin ParD4 (parD4) from Caulobacter vibrioides (strain ATCC 19089 / CIP 103742 / CB 15) (Caulobacter crescentus).